A 162-amino-acid polypeptide reads, in one-letter code: Precursor protein UG (162 aa).

Positions 1 to 19 (MERILLCFIVATLVAISMA) are cleaved as a signal peptide. The propeptide occupies 20–23 (NPRP). Cystine bridges form between Cys30–Cys42 and Cys33–Cys49. Residues 56–59 (VPKP) constitute a propeptide that is removed on maturation. Intrachain disulfides connect Cys66–Cys78 and Cys69–Cys85. Positions 92–95 (VPKP) are excised as a propeptide. Intrachain disulfides connect Cys102–Cys114 and Cys105–Cys121. Positions 128–131 (VPKP) are excised as a propeptide. Cystine bridges form between Cys138/Cys150 and Cys141/Cys157.

The protein belongs to the sea anemone BBH family.

The protein resides in the secreted. Its subcellular location is the nematocyst. Affects the ASIC3 channel (ACCN3) and produces analgesic effects. It produces a reversible inhibition effect on both the transient and the sustained current of human ASIC3 channels expressed in X.laevis oocytes. It completely blocks the transient component (IC(50)=10 uM) and partially (48%) inhibits the amplitude of the sustained component (IC(50)=1.44 uM). Using in vivo tests in mice, it reverses inflammatory and acid-induced pain. Its function is as follows. Does not affect the ASIC3 channel. Does not cause lethality or paralysis of noble crayfish (A.astacus) at a dose of 1 mg/kg. The protein is Precursor protein UG of Urticina grebelnyi (Painted anemone).